The primary structure comprises 317 residues: Putative ribosomal protein uL10-like (317 aa).

Position 24 is a phosphotyrosine (tyrosine 24). The residue at position 59 (threonine 59) is a Phosphothreonine. The interval 292 to 317 (AAAPAKVEAKEESEESDEDMGFGLFD) is disordered. Lysine 297 participates in a covalent cross-link: Glycyl lysine isopeptide (Lys-Gly) (interchain with G-Cter in SUMO1); alternate. Residue lysine 297 forms a Glycyl lysine isopeptide (Lys-Gly) (interchain with G-Cter in SUMO2); alternate linkage. Positions 302-311 (EESEESDEDM) are enriched in acidic residues. Serine 304 and serine 307 each carry phosphoserine.

Belongs to the universal ribosomal protein uL10 family. P0 forms a pentameric complex by interaction with dimers of P1 and P2.

Functionally, ribosomal protein P0 is the functional equivalent of E.coli protein L10. In Homo sapiens (Human), this protein is Putative ribosomal protein uL10-like (RPLP0P6).